The chain runs to 644 residues: uncharacterized protein (644 aa).

The disordered stretch occupies residues 1 to 39 (MKANGLDNDPARTRMERTDIDSEHPEAQPLLNNNHRTLG). Residues 1-90 (MKANGLDNDP…ILNILILINT (90 aa)) are Cytoplasmic-facing. A compositionally biased stretch (basic and acidic residues) spans 9–26 (DPARTRMERTDIDSEHPE). Residues Ser22, Ser56, and Ser63 each carry the phosphoserine modification. A helical transmembrane segment spans residues 91-111 (IWLVTTLISDFFFNINILFGF). The Vacuolar segment spans residues 112–122 (SNRYASFNDLT). Residues 123–143 (LIFISIIANSFNLWFNKLGLY) form a helical membrane-spanning segment. Residues 144–147 (SALD) are Cytoplasmic-facing. The helical transmembrane segment at 148–168 (YSLNVTLCVLTLFNLALTYLI) threads the bilayer. The Vacuolar portion of the chain corresponds to 169 to 174 (KYTRQR). A helical transmembrane segment spans residues 175-195 (IGFVGTFTYLWTSFSFFIGAI). Residues 196–271 (LDWYLLFYNN…EWVSIGFRNT (76 aa)) lie on the Cytoplasmic side of the membrane. Positions 225–251 (NENHTNSTENRDRSQYGSGSPTPTHRS) are disordered. Over residues 239 to 251 (QYGSGSPTPTHRS) the composition is skewed to polar residues. At Ser244 the chain carries Phosphoserine. A helical transmembrane segment spans residues 272 to 292 (IKFLILIFFALFTLNTLLTTL). The Vacuolar segment spans residues 293–644 (DTYRLTHKLP…IGELGKLTED (352 aa)). The AB hydrolase-1 domain occupies 348 to 619 (PIILFEHGGY…IVEGGHEIYK (272 aa)). A disordered region spans residues 469–492 (GRGDGDDGDDGNGNDGDGRNHDKT).

The protein localises to the vacuole membrane. This is an uncharacterized protein from Saccharomyces cerevisiae (strain YJM789) (Baker's yeast).